We begin with the raw amino-acid sequence, 94 residues long: MICOS complex subunit MIC12 (94 aa).

Residues 7 to 23 (YGSFSVVASVLGASYYY) form a helical membrane-spanning segment.

This sequence belongs to the MICOS complex subunit Mic12 family. Component of the mitochondrial contact site and cristae organizing system (MICOS) complex.

The protein resides in the mitochondrion inner membrane. Functionally, component of the MICOS complex, a large protein complex of the mitochondrial inner membrane that plays crucial roles in the maintenance of crista junctions, inner membrane architecture, and formation of contact sites to the outer membrane. The sequence is that of MICOS complex subunit MIC12 (AIM5) from Eremothecium gossypii (strain ATCC 10895 / CBS 109.51 / FGSC 9923 / NRRL Y-1056) (Yeast).